A 141-amino-acid chain; its full sequence is Large ribosomal subunit protein uL11 (141 aa).

The protein belongs to the universal ribosomal protein uL11 family. In terms of assembly, part of the ribosomal stalk of the 50S ribosomal subunit. Interacts with L10 and the large rRNA to form the base of the stalk. L10 forms an elongated spine to which L12 dimers bind in a sequential fashion forming a multimeric L10(L12)X complex. One or more lysine residues are methylated.

Functionally, forms part of the ribosomal stalk which helps the ribosome interact with GTP-bound translation factors. This Synechococcus elongatus (strain ATCC 33912 / PCC 7942 / FACHB-805) (Anacystis nidulans R2) protein is Large ribosomal subunit protein uL11.